A 206-amino-acid chain; its full sequence is Large ribosomal subunit protein uL4 (206 aa).

A disordered region spans residues 44–87 (KRQGTHATKTRGMKRGGGAKPWRQKGTGRARAGSTRSPLWRGGG).

Belongs to the universal ribosomal protein uL4 family. In terms of assembly, part of the 50S ribosomal subunit.

Its function is as follows. One of the primary rRNA binding proteins, this protein initially binds near the 5'-end of the 23S rRNA. It is important during the early stages of 50S assembly. It makes multiple contacts with different domains of the 23S rRNA in the assembled 50S subunit and ribosome. In terms of biological role, forms part of the polypeptide exit tunnel. The sequence is that of Large ribosomal subunit protein uL4 from Maridesulfovibrio salexigens (strain ATCC 14822 / DSM 2638 / NCIMB 8403 / VKM B-1763) (Desulfovibrio salexigens).